Consider the following 118-residue polypeptide: Small ribosomal subunit protein uS13 (118 aa).

The interval 92–118 is disordered; the sequence is RRGLPVRGQRTKTNARTRKGPRKPIKK.

This sequence belongs to the universal ribosomal protein uS13 family. As to quaternary structure, part of the 30S ribosomal subunit. Forms a loose heterodimer with protein S19. Forms two bridges to the 50S subunit in the 70S ribosome.

Functionally, located at the top of the head of the 30S subunit, it contacts several helices of the 16S rRNA. In the 70S ribosome it contacts the 23S rRNA (bridge B1a) and protein L5 of the 50S subunit (bridge B1b), connecting the 2 subunits; these bridges are implicated in subunit movement. Contacts the tRNAs in the A and P-sites. The polypeptide is Small ribosomal subunit protein uS13 (Yersinia pestis).